The sequence spans 155 residues: Small ribosomal subunit protein uS7c (155 aa).

It belongs to the universal ribosomal protein uS7 family. In terms of assembly, part of the 30S ribosomal subunit.

The protein resides in the plastid. It localises to the chloroplast. One of the primary rRNA binding proteins, it binds directly to 16S rRNA where it nucleates assembly of the head domain of the 30S subunit. In Pinus koraiensis (Korean pine), this protein is Small ribosomal subunit protein uS7c (rps7).